A 207-amino-acid chain; its full sequence is Holliday junction resolvase RecU (207 aa).

A disordered region spans residues 1 to 21; it reads MTIRYPNGQVYRQPGPTKSKS. Mg(2+) is bound by residues threonine 87, aspartate 89, glutamate 102, and glutamine 121.

Belongs to the RecU family. Mg(2+) serves as cofactor.

The protein resides in the cytoplasm. It carries out the reaction Endonucleolytic cleavage at a junction such as a reciprocal single-stranded crossover between two homologous DNA duplexes (Holliday junction).. In terms of biological role, endonuclease that resolves Holliday junction intermediates in genetic recombination. Cleaves mobile four-strand junctions by introducing symmetrical nicks in paired strands. Promotes annealing of linear ssDNA with homologous dsDNA. Required for DNA repair, homologous recombination and chromosome segregation. This is Holliday junction resolvase RecU from Lactiplantibacillus plantarum (strain ATCC BAA-793 / NCIMB 8826 / WCFS1) (Lactobacillus plantarum).